The primary structure comprises 224 residues: ATP-dependent dethiobiotin synthetase BioD (224 aa).

Thr18 is a Mg(2+) binding site. Residue Lys39 is part of the active site. A substrate-binding site is contributed by Ser43. Residues Asp56 and Glu117 each coordinate Mg(2+). ATP-binding positions include Asp56, Glu117–Gly120, and Asn177–Glu178.

It belongs to the dethiobiotin synthetase family. Homodimer. Mg(2+) is required as a cofactor.

The protein resides in the cytoplasm. The enzyme catalyses (7R,8S)-7,8-diammoniononanoate + CO2 + ATP = (4R,5S)-dethiobiotin + ADP + phosphate + 3 H(+). It functions in the pathway cofactor biosynthesis; biotin biosynthesis; biotin from 7,8-diaminononanoate: step 1/2. In terms of biological role, catalyzes a mechanistically unusual reaction, the ATP-dependent insertion of CO2 between the N7 and N8 nitrogen atoms of 7,8-diaminopelargonic acid (DAPA, also called 7,8-diammoniononanoate) to form a ureido ring. This chain is ATP-dependent dethiobiotin synthetase BioD, found in Xanthomonas euvesicatoria pv. vesicatoria (strain 85-10) (Xanthomonas campestris pv. vesicatoria).